A 336-amino-acid polypeptide reads, in one-letter code: 4-hydroxythreonine-4-phosphate dehydrogenase (336 aa).

Residues H135 and T136 each coordinate substrate. The a divalent metal cation site is built by H165, H210, and H265. The substrate site is built by K273, N282, and R291.

The protein belongs to the PdxA family. As to quaternary structure, homodimer. Requires Zn(2+) as cofactor. It depends on Mg(2+) as a cofactor. The cofactor is Co(2+).

Its subcellular location is the cytoplasm. It catalyses the reaction 4-(phosphooxy)-L-threonine + NAD(+) = 3-amino-2-oxopropyl phosphate + CO2 + NADH. It functions in the pathway cofactor biosynthesis; pyridoxine 5'-phosphate biosynthesis; pyridoxine 5'-phosphate from D-erythrose 4-phosphate: step 4/5. Its function is as follows. Catalyzes the NAD(P)-dependent oxidation of 4-(phosphooxy)-L-threonine (HTP) into 2-amino-3-oxo-4-(phosphooxy)butyric acid which spontaneously decarboxylates to form 3-amino-2-oxopropyl phosphate (AHAP). The chain is 4-hydroxythreonine-4-phosphate dehydrogenase from Marinobacter nauticus (strain ATCC 700491 / DSM 11845 / VT8) (Marinobacter aquaeolei).